A 35-amino-acid chain; its full sequence is Entry-fusion complex protein OPG076 (35 aa).

A helical transmembrane segment spans residues Leu2–Leu22. The Virion surface portion of the chain corresponds to Cys23–Arg35.

The protein belongs to the orthopoxvirus OPG076 family. In terms of assembly, component of the entry fusion complex (EFC) composed of OPG053, OPG076, OPG086, OPG094, OPG095, OPG099, OPG107, OPG143, OPG104, OPG147 and OPG155. Except for OPG095 and OPG053, each of the EFC proteins is required for assembly or stability of the complex. Post-translationally, unglycosylated because produced in viral factories instead of the classic ER -Golgi route.

The protein resides in the virion membrane. In terms of biological role, component of the entry fusion complex (EFC), which consists of 11 proteins. During cell infection, this complex mediates entry of the virion core into the host cytoplasm by a two-step mechanism consisting of lipid mixing of the viral and cellular membranes and subsequent pore formation. This is Entry-fusion complex protein OPG076 (OPG076) from Cynomys gunnisoni (Gunnison's prairie dog).